We begin with the raw amino-acid sequence, 542 residues long: CTP synthase (542 aa).

The tract at residues 1-265 is amidoligase domain; sequence MARYVFITGG…DSEVLSAFGI (265 aa). Ser13 lines the CTP pocket. Ser13 provides a ligand contact to UTP. 14–19 serves as a coordination point for ATP; that stretch reads SLGKGI. Tyr54 is an L-glutamine binding site. Residue Asp71 participates in ATP binding. Mg(2+)-binding residues include Asp71 and Glu139. Residues 146 to 148, 186 to 191, and Lys222 each bind CTP; these read DIE and KTKPTQ. UTP contacts are provided by residues 186-191 and Lys222; that span reads KTKPTQ. The Glutamine amidotransferase type-1 domain maps to 291-541; sequence TIAVVGKYTG…IEAAIEQSRL (251 aa). Gly353 is a binding site for L-glutamine. Residue Cys380 is the Nucleophile; for glutamine hydrolysis of the active site. L-glutamine contacts are provided by residues 381–384, Glu404, and Arg469; that span reads FGMQ. Active-site residues include His514 and Glu516.

This sequence belongs to the CTP synthase family. Homotetramer.

It carries out the reaction UTP + L-glutamine + ATP + H2O = CTP + L-glutamate + ADP + phosphate + 2 H(+). It catalyses the reaction L-glutamine + H2O = L-glutamate + NH4(+). The enzyme catalyses UTP + NH4(+) + ATP = CTP + ADP + phosphate + 2 H(+). It participates in pyrimidine metabolism; CTP biosynthesis via de novo pathway; CTP from UDP: step 2/2. With respect to regulation, allosterically activated by GTP, when glutamine is the substrate; GTP has no effect on the reaction when ammonia is the substrate. The allosteric effector GTP functions by stabilizing the protein conformation that binds the tetrahedral intermediate(s) formed during glutamine hydrolysis. Inhibited by the product CTP, via allosteric rather than competitive inhibition. Functionally, catalyzes the ATP-dependent amination of UTP to CTP with either L-glutamine or ammonia as the source of nitrogen. Regulates intracellular CTP levels through interactions with the four ribonucleotide triphosphates. In Brucella canis (strain ATCC 23365 / NCTC 10854 / RM-666), this protein is CTP synthase.